The chain runs to 155 residues: SsrA-binding protein (155 aa).

This sequence belongs to the SmpB family.

It localises to the cytoplasm. In terms of biological role, required for rescue of stalled ribosomes mediated by trans-translation. Binds to transfer-messenger RNA (tmRNA), required for stable association of tmRNA with ribosomes. tmRNA and SmpB together mimic tRNA shape, replacing the anticodon stem-loop with SmpB. tmRNA is encoded by the ssrA gene; the 2 termini fold to resemble tRNA(Ala) and it encodes a 'tag peptide', a short internal open reading frame. During trans-translation Ala-aminoacylated tmRNA acts like a tRNA, entering the A-site of stalled ribosomes, displacing the stalled mRNA. The ribosome then switches to translate the ORF on the tmRNA; the nascent peptide is terminated with the 'tag peptide' encoded by the tmRNA and targeted for degradation. The ribosome is freed to recommence translation, which seems to be the essential function of trans-translation. The chain is SsrA-binding protein from Streptococcus suis (strain 98HAH33).